The following is a 390-amino-acid chain: Zinc finger protein 121 (390 aa).

Residues 88–110 (FEYSDCEEAFVDQSHLQANRITH) form a C2H2-type 1; degenerate zinc finger. The segment at 116-138 (YEQKQCGRAFTYSTSHAVSVKMH) adopts a C2H2-type 2; degenerate zinc-finger fold. 9 consecutive C2H2-type zinc fingers follow at residues 144 to 166 (YECK…MRTH), 172 to 194 (YECK…VRIH), 200 to 222 (YQCK…VRIH), 228 to 250 (YECN…FKTH), 256 to 278 (FECK…FRIH), 284 to 306 (YKCK…VKIH), 312 to 334 (YECK…IRTH), 340 to 362 (YICK…VRIH), and 368 to 390 (YICN…LKTH).

This sequence belongs to the krueppel C2H2-type zinc-finger protein family.

The protein localises to the nucleus. In terms of biological role, may be involved in transcriptional regulation. The sequence is that of Zinc finger protein 121 (ZNF121) from Homo sapiens (Human).